Consider the following 195-residue polypeptide: Ribonuclease HII (195 aa).

One can recognise an RNase H type-2 domain in the interval 6–195 (SLIAGVDEVG…KSFISRLEIN (190 aa)). A divalent metal cation-binding residues include aspartate 12, glutamate 13, and aspartate 108.

The protein belongs to the RNase HII family. Requires Mn(2+) as cofactor. Mg(2+) serves as cofactor.

It is found in the cytoplasm. It catalyses the reaction Endonucleolytic cleavage to 5'-phosphomonoester.. In terms of biological role, endonuclease that specifically degrades the RNA of RNA-DNA hybrids. This Prochlorococcus marinus (strain NATL1A) protein is Ribonuclease HII.